A 208-amino-acid chain; its full sequence is Ribonuclease HII (208 aa).

One can recognise an RNase H type-2 domain in the interval 5 to 198 (PLIAGVDEVG…CQPRLEHDCR (194 aa)). A divalent metal cation contacts are provided by Asp-11, Glu-12, and Asp-106.

The protein belongs to the RNase HII family. Mn(2+) is required as a cofactor. The cofactor is Mg(2+).

Its subcellular location is the cytoplasm. The enzyme catalyses Endonucleolytic cleavage to 5'-phosphomonoester.. Its function is as follows. Endonuclease that specifically degrades the RNA of RNA-DNA hybrids. The protein is Ribonuclease HII of Microcystis aeruginosa (strain NIES-843 / IAM M-2473).